The primary structure comprises 154 residues: Ribonuclease H (154 aa).

Residues 1–142 (MTKQVEIFTD…CDELAREGAN (142 aa)) enclose the RNase H type-1 domain. The Mg(2+) site is built by aspartate 10, glutamate 48, aspartate 70, and aspartate 134.

This sequence belongs to the RNase H family. As to quaternary structure, monomer. Requires Mg(2+) as cofactor.

It localises to the cytoplasm. It catalyses the reaction Endonucleolytic cleavage to 5'-phosphomonoester.. Its function is as follows. Endonuclease that specifically degrades the RNA of RNA-DNA hybrids. The polypeptide is Ribonuclease H (Yersinia enterocolitica serotype O:8 / biotype 1B (strain NCTC 13174 / 8081)).